Consider the following 287-residue polypeptide: ATP synthase gamma chain (287 aa).

It belongs to the ATPase gamma chain family. In terms of assembly, F-type ATPases have 2 components, CF(1) - the catalytic core - and CF(0) - the membrane proton channel. CF(1) has five subunits: alpha(3), beta(3), gamma(1), delta(1), epsilon(1). CF(0) has three main subunits: a, b and c.

It is found in the cell inner membrane. Functionally, produces ATP from ADP in the presence of a proton gradient across the membrane. The gamma chain is believed to be important in regulating ATPase activity and the flow of protons through the CF(0) complex. The sequence is that of ATP synthase gamma chain from Tolumonas auensis (strain DSM 9187 / NBRC 110442 / TA 4).